We begin with the raw amino-acid sequence, 251 residues long: Cobalt transport protein CbiM (251 aa).

An N-terminal signal peptide occupies residues 1 to 27; it reads MNKKKNTILIGLYFLVGIMLFPDRIYA. 6 helical membrane-spanning segments follow: residues 35 to 55, 66 to 86, 103 to 123, 131 to 151, 166 to 186, and 208 to 228; these read LPVKWAGIWWIAMLPFLALGI, GPGIKMLLALAGAFVFVLSSL, LGAILFGPWPMVVLGCIVLIF, GGLTTLGANVFSMAIVGPFVA, WLSVFTGSALGNLLTYITTAT, and VFATTQVPLAVTEGLVTVLIF.

The protein belongs to the CbiM family. As to quaternary structure, forms an energy-coupling factor (ECF) transporter complex composed of an ATP-binding protein (A component, CbiO), a transmembrane protein (T component, CbiQ) and 2 possible substrate-capture proteins (S components, CbiM and CbiN) of unknown stoichimetry.

Its subcellular location is the cell membrane. Its pathway is cofactor biosynthesis; adenosylcobalamin biosynthesis. Part of the energy-coupling factor (ECF) transporter complex CbiMNOQ involved in cobalt import. The chain is Cobalt transport protein CbiM from Acetohalobium arabaticum (strain ATCC 49924 / DSM 5501 / Z-7288).